The following is a 712-amino-acid chain: Cyclomaltodextrin glucanotransferase (712 aa).

Residues 1-27 (MKRFMKLTAVWTLWLSLTLGLLSPVHA) form the signal peptide. Residues 28-165 (APDTSVSNKQ…NIKVIIDFAP (138 aa)) form an A1 region. 4 residues coordinate Ca(2+): Asp-54, Asn-56, Asn-59, and Asn-60. Cys-70 and Cys-77 form a disulfide bridge. Ca(2+) contacts are provided by Gly-78 and Asp-80. Residue 127–128 (YW) coordinates substrate. Residue Asn-166 participates in Ca(2+) binding. Residues 166 to 229 (NHTSPASSDD…NLYDLADLNH (64 aa)) form a b region. His-167 is a substrate binding site. Residue Ile-217 participates in Ca(2+) binding. 220 to 223 (NLYD) provides a ligand contact to substrate. Asp-226 contributes to the Ca(2+) binding site. The interval 230 to 433 (NNSSVDVYLK…LRKSNPAIAY (204 aa)) is A2. Residue Arg-254 participates in substrate binding. Asp-256 serves as the catalytic Nucleophile. Residue 259 to 260 (KH) coordinates substrate. His-260 is a Ca(2+) binding site. Glu-284 serves as the catalytic Proton donor. Positions 354, 398, and 402 each coordinate substrate. Residues 434 to 522 (GSTQERWINN…GTAVWQYTTD (89 aa)) form a c region. The segment at 523–608 (ATAPINGNVG…SNIYDNFEVL (86 aa)) is d. The region spanning 526 to 606 (PINGNVGPMM…AASNIYDNFE (81 aa)) is the IPT/TIG domain. The 106-residue stretch at 607–712 (VLTGDQVTVR…TATVNVNWQP (106 aa)) folds into the CBM20 domain. The tract at residues 609-712 (TGDQVTVRFV…TATVNVNWQP (104 aa)) is e.

This sequence belongs to the glycosyl hydrolase 13 family. Monomer. It depends on Ca(2+) as a cofactor.

Its subcellular location is the secreted. It carries out the reaction Cyclizes part of a (1-&gt;4)-alpha-D-glucan chain by formation of a (1-&gt;4)-alpha-D-glucosidic bond.. The sequence is that of Cyclomaltodextrin glucanotransferase (cgt) from Bacillus sp. (strain 38-2).